The sequence spans 234 residues: Proteasome subunit beta (234 aa).

A disordered region spans residues methionine 1–valine 35. Residues methionine 1–glycine 39 constitute a propeptide, removed in mature form; by autocatalysis. Residue threonine 40 is the Nucleophile of the active site.

Belongs to the peptidase T1B family. The 20S proteasome core is composed of 14 alpha and 14 beta subunits that assemble into four stacked heptameric rings, resulting in a barrel-shaped structure. The two inner rings, each composed of seven catalytic beta subunits, are sandwiched by two outer rings, each composed of seven alpha subunits. The catalytic chamber with the active sites is on the inside of the barrel. Has a gated structure, the ends of the cylinder being occluded by the N-termini of the alpha-subunits. Is capped at one or both ends by the proteasome regulatory ATPase, PAN.

It localises to the cytoplasm. The catalysed reaction is Cleavage of peptide bonds with very broad specificity.. With respect to regulation, the formation of the proteasomal ATPase PAN-20S proteasome complex, via the docking of the C-termini of PAN into the intersubunit pockets in the alpha-rings, triggers opening of the gate for substrate entry. Interconversion between the open-gate and close-gate conformations leads to a dynamic regulation of the 20S proteasome proteolysis activity. In terms of biological role, component of the proteasome core, a large protease complex with broad specificity involved in protein degradation. This chain is Proteasome subunit beta, found in Halorhabdus utahensis (strain DSM 12940 / JCM 11049 / AX-2).